The primary structure comprises 548 residues: MDRLLTYFQVRGERANAVRLFGEISEQIDCSHLKRDCFVNGICARQHFKECCNIATDNGSRTNADKLVALAMRALLDRQTIWACVIKNADYVSQYADEQMEEEVNKLYDVYLQSGTREEFEGFRQRSRPSRVVMDDSCSMLSYFYIPMNQGNPAPVAKLSRWGQFGICYYDRTNVDGLIPYDEIGLAQAIDGLKDLIEGRLPVCPYTGVNSRINAVLHLPLEMEVIMAVQENATQLMRRAAQDFKFITHAGWKLYPRLLRQRFAIGDACGGVIHHVMLGHLRYYDGDTSIVKYCFLYDGSLDWRTWTVPLHLMRTARLGHLQPESILFFMHKSLRVRYVLWLTSLCLTQSQWLIQKLPELTGGTDVFYTRAYVHAENHKVPNDRDLMMNEVFRKIDDHWVIQKCHTTKEAITVTAIQIQRSIRGDGQWDTPMFHQSMALLTRLIVYWLTDVTERSAIFRLTCYAIFGCKPTARGRYIDWDDLGTFMKNVLDGRDLTVLEDETCFISMMRMAMLHVRRSKVVCATVLEAPLEIQQVGQIVEVPFDFMHN.

The protein belongs to the orbivirus non-structural protein NS1 family.

The polypeptide is Non-structural protein NS1 (Segment-5) (Camelus dromedarius (Dromedary)).